The following is a 557-amino-acid chain: Eukaryotic translation initiation factor 3 subunit D-2 (557 aa).

Residues 292 to 306 (QFDMLTVNETALEPP) form an RNA gate region. Residues 533–557 (FDSDNNDGEETSDDRPFLNSKDNKL) form a disordered region. Residues 545 to 557 (DDRPFLNSKDNKL) are compositionally biased toward basic and acidic residues.

This sequence belongs to the eIF-3 subunit D family. As to quaternary structure, component of the eukaryotic translation initiation factor 3 (eIF-3) complex. The eIF-3 complex interacts with pix.

The protein resides in the cytoplasm. Functionally, mRNA cap-binding component of the eukaryotic translation initiation factor 3 (eIF-3) complex, which is involved in protein synthesis of a specialized repertoire of mRNAs and, together with other initiation factors, stimulates binding of mRNA and methionyl-tRNAi to the 40S ribosome. The eIF-3 complex specifically targets and initiates translation of a subset of mRNAs involved in cell proliferation. In the eIF-3 complex, eif3d specifically recognizes and binds the 7-methylguanosine cap of a subset of mRNAs. In Drosophila grimshawi (Hawaiian fruit fly), this protein is Eukaryotic translation initiation factor 3 subunit D-2.